Here is an 81-residue protein sequence, read N- to C-terminus: Sec-independent protein translocase protein TatA (81 aa).

A helical transmembrane segment spans residues 1–21 (MGMPSGQELLIILAIVVLLFG). Residues 45 to 81 (NEDDDTEVKSASTEAPKKVESAEEVASKESSKTPTQA) form a disordered region. The span at 59–75 (APKKVESAEEVASKESS) shows a compositional bias: basic and acidic residues.

The protein belongs to the TatA/E family. The Tat system comprises two distinct complexes: a TatABC complex, containing multiple copies of TatA, TatB and TatC subunits, and a separate TatA complex, containing only TatA subunits. Substrates initially bind to the TatABC complex, which probably triggers association of the separate TatA complex to form the active translocon.

The protein resides in the cell inner membrane. Its function is as follows. Part of the twin-arginine translocation (Tat) system that transports large folded proteins containing a characteristic twin-arginine motif in their signal peptide across membranes. TatA could form the protein-conducting channel of the Tat system. The protein is Sec-independent protein translocase protein TatA of Sulfurimonas denitrificans (strain ATCC 33889 / DSM 1251) (Thiomicrospira denitrificans (strain ATCC 33889 / DSM 1251)).